Here is a 926-residue protein sequence, read N- to C-terminus: Taz1-interacting factor 1 (926 aa).

Coiled-coil stretches lie at residues 461-496 (REAV…SHQN) and 548-671 (SFTD…LKQK). Serine 548 is subject to Phosphoserine. The residue at position 550 (threonine 550) is a Phosphothreonine. A Phosphoserine modification is found at serine 552.

The protein belongs to the ATG11 family. As to quaternary structure, homodimer and potential homooligomers. Interacts with taz1.

The protein localises to the preautophagosomal structure membrane. Its subcellular location is the vacuole membrane. Functionally, involved in cytoplasm to vacuole transport (Cvt), pexophagy, mitophagy and nucleophagy. Recruits mitochondria for their selective degradation via autophagy (mitophagy) during starvation. Works as scaffold proteins that recruit ATG proteins to the preautophagosome (PAS), the site of vesicle/autophagosome formation. Required for atg9 anterograde transport from the mitochondria to the PAS. Required for nitrogen starvation-induced sexual development and for entering the dormant G0 state. In Schizosaccharomyces pombe (strain 972 / ATCC 24843) (Fission yeast), this protein is Taz1-interacting factor 1 (taf1).